The following is an 82-amino-acid chain: RNA-binding protein BPUM_0095 (82 aa).

The protein belongs to the eukaryotic ribosomal protein eL8 family.

The chain is RNA-binding protein BPUM_0095 from Bacillus pumilus (strain SAFR-032).